The sequence spans 197 residues: Holliday junction branch migration complex subunit RuvA (197 aa).

The segment at 1 to 64 (MIARLAGKVA…QDAIELYGFA (64 aa)) is domain I. Positions 65–141 (SEDEEAVFRA…LALLARAAGP (77 aa)) are domain II. The segment at 141–145 (PARAK) is flexible linker. Positions 146 to 197 (PGAGVVEQLRQALVNLGYKPPQADAAADALRDEAEGKKLDELLREALKRLRG) are domain III.

This sequence belongs to the RuvA family. As to quaternary structure, homotetramer. Forms an RuvA(8)-RuvB(12)-Holliday junction (HJ) complex. HJ DNA is sandwiched between 2 RuvA tetramers; dsDNA enters through RuvA and exits via RuvB. An RuvB hexamer assembles on each DNA strand where it exits the tetramer. Each RuvB hexamer is contacted by two RuvA subunits (via domain III) on 2 adjacent RuvB subunits; this complex drives branch migration. In the full resolvosome a probable DNA-RuvA(4)-RuvB(12)-RuvC(2) complex forms which resolves the HJ.

Its subcellular location is the cytoplasm. The RuvA-RuvB-RuvC complex processes Holliday junction (HJ) DNA during genetic recombination and DNA repair, while the RuvA-RuvB complex plays an important role in the rescue of blocked DNA replication forks via replication fork reversal (RFR). RuvA specifically binds to HJ cruciform DNA, conferring on it an open structure. The RuvB hexamer acts as an ATP-dependent pump, pulling dsDNA into and through the RuvAB complex. HJ branch migration allows RuvC to scan DNA until it finds its consensus sequence, where it cleaves and resolves the cruciform DNA. The sequence is that of Holliday junction branch migration complex subunit RuvA from Anaeromyxobacter sp. (strain Fw109-5).